The sequence spans 807 residues: uncharacterized protein (807 aa).

The Reverse transcriptase domain occupies 281–566 (IIQSLKSEEF…DKILFLGTNI (286 aa)).

The protein resides in the mitochondrion. This is an uncharacterized protein from Schizosaccharomyces pombe (strain 972 / ATCC 24843) (Fission yeast).